The following is a 209-amino-acid chain: Uracil phosphoribosyltransferase (209 aa).

Residues Arg-79, Arg-104, and 131–139 (DPMLATGVS) each bind 5-phospho-alpha-D-ribose 1-diphosphate. Residues Ile-194 and 199 to 201 (GDA) contribute to the uracil site. Asp-200 is a 5-phospho-alpha-D-ribose 1-diphosphate binding site.

It belongs to the UPRTase family. Mg(2+) serves as cofactor.

It catalyses the reaction UMP + diphosphate = 5-phospho-alpha-D-ribose 1-diphosphate + uracil. It participates in pyrimidine metabolism; UMP biosynthesis via salvage pathway; UMP from uracil: step 1/1. With respect to regulation, allosterically activated by GTP. In terms of biological role, catalyzes the conversion of uracil and 5-phospho-alpha-D-ribose 1-diphosphate (PRPP) to UMP and diphosphate. In Thermotoga neapolitana (strain ATCC 49049 / DSM 4359 / NBRC 107923 / NS-E), this protein is Uracil phosphoribosyltransferase.